The chain runs to 433 residues: Serendipity locus protein delta (433 aa).

The region spanning 1–90 (MDTCFFCGAV…TQKRLTTQLK (90 aa)) is the ZAD domain. The Zn(2+) site is built by C4, C7, C61, and C64. The segment at 141-162 (DTEIKREFVDEEEEEDDDDDDE) is disordered. A compositionally biased stretch (acidic residues) spans 149-162 (VDEEEEEDDDDDDE). A Nuclear localization signal motif is present at residues 187 to 193 (PTKKRVK). 7 C2H2-type zinc fingers span residues 194–217 (QECT…SEEH), 223–245 (HICP…MNLH), 251–273 (KQCR…MRMH), 279–301 (YQCE…RLRH), 308–330 (IICS…TLIH), 337–359 (HYCS…MKTH), and 405–428 (GFCL…QFDH).

Homodimer (via ZAD domain) in solution. Binds DNA as a homodimer. N-terminal regions of the protein are required, in addition to the zinc fingers, for the specificity of chromatin-binding. As to expression, predominantly localized to the sub- and supraesophagal ganglia and the ventral nerve cord in the embryo, after dorsal closure.

The protein resides in the nucleus. Its function is as follows. Transcriptional activator that controls bicoid gene expression during oogenesis. Found in transcriptionally active cells. Binds to specific sites on polytene chromosomes of third instar larvae. Binds to the consensus DNA sequence 5'-YTAGAGATGGRAA-3'. In Drosophila melanogaster (Fruit fly), this protein is Serendipity locus protein delta (Sry-delta).